A 93-amino-acid chain; its full sequence is Envelope small membrane protein (93 aa).

Topologically, residues 1–11 are virion surface; sequence MMNLLNKSLEE. A helical transmembrane segment spans residues 12–32; that stretch reads NGSVLTAFYIFVAFVALYLLG. Residues 33-93 lie on the Intravirion side of the membrane; the sequence is RALQAFVQAA…NEFPKNGWKQ (61 aa).

This sequence belongs to the gammacoronaviruses E protein family. Homooligomer. Interacts with the M membrane protein in the budding compartment of the host cell, which is located between endoplasmic reticulum and the Golgi complex. The cytoplasmic tails of both proteins are important for this function. Interacts with Nucleoprotein.

It is found in the host Golgi apparatus membrane. In terms of biological role, plays a central role in virus morphogenesis and assembly. Acts as a viroporin and self-assembles in host membranes forming pentameric protein-lipid pores that allow ion transport. Also plays a role in the induction of apoptosis. This Avian infectious bronchitis virus (strain Portugal/322/82) (IBV) protein is Envelope small membrane protein.